Consider the following 674-residue polypeptide: MSSLISFNFLFLFSFLTSSFTASAQDPFYLNHYCPNTTTYSSNSTYSTNLRTLLSSLSSRNASYSTGFQNATAGKAPDRVTGLFLCRGDVSPEVCRNCVAFSVNQTLNLCPKVREAVFYYEQCILRYSHKNILSTAITNEGEFILSNTNTISPNQKQIDGFTSFVSSTMSEAAGKAANSSRKLYTVNTELTAYQNLYGLLQCTPDLTRADCLSCLQSSINGMALSRIGARLYWPSCTARYELYPFYNESAIETPPLPPPPPPPPPRESLVSTPPISSSSLPGKSGNSTVLVVAVVVLAVLLFIALVGYCFLAKKKKKTFDTASASEVGDDMATADSLQLDYRTIQTATNDFAESNKIGRGGFGEVYKGTFSNGKEVAVKRLSKNSRQGEAEFKTEVVVVAKLQHRNLVRLLGFSLQGEERILVYEYMPNKSLDCLLFDPTKQIQLDWMQRYNIIGGIARGILYLHQDSRLTIIHRDLKASNILLDADINPKIADFGMARIFGLDQTQDNTSRIVGTYGYMAPEYAMHGQFSMKSDVYSFGVLVLEIISGRKNSSFGESDGAQDLLTHAWRLWTNKKALDLVDPLIAENCQNSEVVRCIHIGLLCVQEDPAKRPAISTVFMMLTSNTVTLPVPRQPGFFIQCRAVKDPLDSDQSTTTKSFPASIDDESITDLYPR.

The N-terminal stretch at 1–24 is a signal peptide; the sequence is MSSLISFNFLFLFSFLTSSFTASA. Residues 25–289 are Extracellular-facing; sequence QDPFYLNHYC…LPGKSGNSTV (265 aa). 2 Gnk2-homologous domains span residues 28 to 132 and 139 to 245; these read FYLN…HKNI and NEGE…LYPF. Residues N36, N43, N61, N70, N104, N178, and N247 are each glycosylated (N-linked (GlcNAc...) asparagine). Residues 254 to 266 show a composition bias toward pro residues; it reads PPLPPPPPPPPPR. The tract at residues 254 to 284 is disordered; sequence PPLPPPPPPPPPRESLVSTPPISSSSLPGKS. Positions 268–284 are enriched in low complexity; it reads SLVSTPPISSSSLPGKS. N-linked (GlcNAc...) asparagine glycosylation is present at N286. The helical transmembrane segment at 290 to 310 threads the bilayer; it reads LVVAVVVLAVLLFIALVGYCF. At 311 to 674 the chain is on the cytoplasmic side; sequence LAKKKKKTFD…DESITDLYPR (364 aa). A Protein kinase domain is found at 351-637; it reads FAESNKIGRG…TLPVPRQPGF (287 aa). ATP contacts are provided by residues 357 to 365 and K379; that span reads IGRGGFGEV. Phosphotyrosine is present on Y424. The active-site Proton acceptor is the D476. Residue S480 is modified to Phosphoserine. T516 bears the Phosphothreonine mark. A Phosphotyrosine modification is found at Y524. Positions 648 to 674 are disordered; it reads LDSDQSTTTKSFPASIDDESITDLYPR. The segment covering 650 to 659 has biased composition (polar residues); it reads SDQSTTTKSF.

This sequence belongs to the protein kinase superfamily. Ser/Thr protein kinase family. CRK subfamily.

Its subcellular location is the membrane. It carries out the reaction L-seryl-[protein] + ATP = O-phospho-L-seryl-[protein] + ADP + H(+). The catalysed reaction is L-threonyl-[protein] + ATP = O-phospho-L-threonyl-[protein] + ADP + H(+). The chain is Cysteine-rich receptor-like protein kinase 6 (CRK6) from Arabidopsis thaliana (Mouse-ear cress).